We begin with the raw amino-acid sequence, 936 residues long: Intimin (936 aa).

Residues 1 to 41 (MIIHGFCTGTRHKHKLRKTFIMLGAGLGLFFSVNQNSFANG) form the signal peptide. Residues 63–112 (LFYTLKTGESVAQLSKSQGISVPVIWSLNKHLYSSESEMMKASPGQQIIL) enclose the LysM domain. Big-1 domains follow at residues 557–650 (ITNF…VIFV) and 657–748 (ITEI…VEFF). Residues 780–831 (KLQATGGNGKYTWKSSNTKIASVDNSGVITLNEKGSATITVVSGDNQSATYT) form the BIG2 domain. C857 and C934 are joined by a disulfide.

This sequence belongs to the intimin/invasin family.

The protein resides in the cell outer membrane. An inverse autotransporter. This Citrobacter freundii protein is Intimin (eae).